Consider the following 388-residue polypeptide: Chorismate synthase (388 aa).

The NADP(+) site is built by R39 and R45. Residues 130 to 132 (RSS), 251 to 252 (NA), A296, 311 to 315 (KPIPT), and R337 contribute to the FMN site.

It belongs to the chorismate synthase family. Homotetramer. FMNH2 serves as cofactor.

It carries out the reaction 5-O-(1-carboxyvinyl)-3-phosphoshikimate = chorismate + phosphate. It participates in metabolic intermediate biosynthesis; chorismate biosynthesis; chorismate from D-erythrose 4-phosphate and phosphoenolpyruvate: step 7/7. Catalyzes the anti-1,4-elimination of the C-3 phosphate and the C-6 proR hydrogen from 5-enolpyruvylshikimate-3-phosphate (EPSP) to yield chorismate, which is the branch point compound that serves as the starting substrate for the three terminal pathways of aromatic amino acid biosynthesis. This reaction introduces a second double bond into the aromatic ring system. This chain is Chorismate synthase, found in Streptococcus equi subsp. equi (strain 4047).